Consider the following 404-residue polypeptide: Dihydrosphingosine 1-phosphate phosphatase YSR3 (404 aa).

At 1–86 (MTIIQTVTEL…PFRDVYFKYT (86 aa)) the chain is on the lumenal side. The N-linked (GlcNAc...) asparagine glycan is linked to N62. A helical membrane pass occupies residues 87-107 (SLMGSHMFYVIVLPMPVWLGY). Residues 108 to 113 (RDLTRD) lie on the Cytoplasmic side of the membrane. Residues 114 to 134 (MIYVLGYSIYLSGYLKDYWCL) form a helical membrane-spanning segment. Residues 129-137 (KDYWCLPRP) form a phosphatase sequence motif I region. Residues 135-154 (PRPKSPPVDRITLSEYTTKE) are Lumenal-facing. Residues 155 to 176 (YGAPSSHSANATAVSLLFFWRI) form a helical membrane-spanning segment. Positions 158 to 161 (PSSH) are phosphatase sequence motif II. H161 (proton donor) is an active-site residue. Residues 177-182 (CLSDTL) are Cytoplasmic-facing. The helical transmembrane segment at 183–203 (VWPTKLLLLSLVIFYYLTLVF) threads the bilayer. The Lumenal portion of the chain corresponds to 204 to 215 (GRVYCGMHGMLD). The tract at residues 204-215 (GRVYCGMHGMLD) is phosphatase sequence motif III. H211 serves as the catalytic Nucleophile. A helical transmembrane segment spans residues 216–236 (LFSGAAVGAICFFIRIWVVHA). The Cytoplasmic segment spans residues 237–241 (LRNFQ). A helical membrane pass occupies residues 242–262 (IGEHLWFPLLSVAWGLFILFN). Residues 263 to 319 (HVRPIDECPCFEDSVAFIGVVSGLDCSDWLTERYGWNLVCSRYASCGSKVFLRPLVG) lie on the Lumenal side of the membrane. The chain crosses the membrane as a helical span at residues 320–340 (VASVIVWKDVISKTAVYTLLI). Residues 341-379 (KLLRFHDDRSEKVHFHNETSEEEECLLYSGVSKVEIVGR) are Cytoplasmic-facing. Residues 380–400 (FLIYAGIPTTVFLLCPVFFTW) traverse the membrane as a helical segment. Residues 401-404 (TNLR) lie on the Lumenal side of the membrane.

Belongs to the type 2 lipid phosphate phosphatase family.

The protein resides in the endoplasmic reticulum membrane. The enzyme catalyses sphinganine 1-phosphate + H2O = sphinganine + phosphate. Its function is as follows. Dihydrosphingosine 1-phosphate phosphatase required for efficient ceramide synthesis from exogenous sphingoid bases. Involved in endocytosis and calcium-mediated signaling. This chain is Dihydrosphingosine 1-phosphate phosphatase YSR3, found in Saccharomyces cerevisiae (strain ATCC 204508 / S288c) (Baker's yeast).